The following is a 131-amino-acid chain: Hyastatin (131 aa).

The first 16 residues, 1–16, serve as a signal peptide directing secretion; it reads MRVLLILVSLAALAHA. Cystine bridges form between Cys103/Cys117, Cys107/Cys124, and Cys118/Cys125. Residue Lys130 is modified to Lysine amide.

In terms of tissue distribution, strongly expressed in hemocytes, with weaker expression in gills and epidermis. Expressed at low levels in hepatopancreas.

It localises to the cytoplasmic granule. Antimicrobial peptide. Has strong antibacterial activity against the Gram-positive bacterium C.glutamicum (MIC=0.4 uM) and the Gram-negative bacterium E.coli (MIC=12.5 uM). Has weak antibacterial activity against the Gram-positive bacterium S.aureus (MIC&gt;50 uM) and the Gram-negative bacterium P.aeruginosa (MIC&gt;50 uM). Has antifungal activity against S.cerevisiae (MIC=12.5) and C.albicans (MIC=6.3 uM). Has weak antifungal activity against the mold B.cinerea. Presents chitin-binding activity. The chain is Hyastatin from Hyas araneus (Atlantic lyre crab).